We begin with the raw amino-acid sequence, 123 residues long: Large ribosomal subunit protein bL12 (123 aa).

The protein belongs to the bacterial ribosomal protein bL12 family. Homodimer. Part of the ribosomal stalk of the 50S ribosomal subunit. Forms a multimeric L10(L12)X complex, where L10 forms an elongated spine to which 2 to 4 L12 dimers bind in a sequential fashion. Binds GTP-bound translation factors.

Functionally, forms part of the ribosomal stalk which helps the ribosome interact with GTP-bound translation factors. Is thus essential for accurate translation. The chain is Large ribosomal subunit protein bL12 from Neisseria perflava.